The sequence spans 412 residues: Subtilisin-like protease 6 (412 aa).

An N-terminal signal peptide occupies residues 1–20 (MGFITKAIPIVLAALSTVNG). The propeptide occupies 21–127 (ARILEAGPHA…VRATTNGTNL (107 aa)). Positions 36–120 (KYIVVMKKDV…FIEPDFVVRA (85 aa)) constitute an Inhibitor I9 domain. A Peptidase S8 domain is found at 135-412 (SWGLARVSTR…SKLIYNGSGK (278 aa)). Catalysis depends on charge relay system residues D167 and H198. N-linked (GlcNAc...) asparagine glycans are attached at residues N252, N264, and N325. The active-site Charge relay system is S358. The N-linked (GlcNAc...) asparagine glycan is linked to N408.

This sequence belongs to the peptidase S8 family.

It is found in the secreted. Secreted subtilisin-like serine protease with keratinolytic activity that contributes to pathogenicity. In Trichophyton verrucosum (strain HKI 0517), this protein is Subtilisin-like protease 6 (SUB6).